A 430-amino-acid polypeptide reads, in one-letter code: N-acylneuraminate cytidylyltransferase A (430 aa).

Residues 1-29 (MDAVNENGKRAMKDDSHGNSTSPKRRKSR) form a disordered region. The span at 7–17 (NGKRAMKDDSH) shows a compositional bias: basic and acidic residues. The short motif at 9–27 (KRAMKDDSHGNSTSPKRRK) is the Bipartite nuclear localization signal element. Arg38, Asn48, Arg97, Ser106, Ser108, and Gln129 together coordinate substrate. The active site involves Arg187.

Belongs to the CMP-NeuNAc synthase family. In terms of assembly, homotetramer.

The protein localises to the nucleus. The catalysed reaction is an N-acylneuraminate + CTP = a CMP-N-acyl-beta-neuraminate + diphosphate. The protein operates within amino-sugar metabolism; N-acetylneuraminate metabolism. Its function is as follows. Catalyzes the activation of N-acetylneuraminic acid (NeuNAc) to cytidine 5'-monophosphate N-acetylneuraminic acid (CMP-NeuNAc), a substrate required for the addition of sialic acid. Also has activity towards N-glycolylneuraminic acid (Neu5Gc). Has weak activity towards 2-keto-3-deoxy-D-glycero-D-galacto-nononic acid (KDN). This Danio rerio (Zebrafish) protein is N-acylneuraminate cytidylyltransferase A.